Reading from the N-terminus, the 232-residue chain is Vesicle transport through interaction with t-SNAREs homolog 1B (232 aa).

The residue at position 2 (alanine 2) is an N-acetylalanine. Interaction with CLINT1 stretches follow at residues 2-23 (AASA…GLLE) and 69-73 (APLTF). The Cytoplasmic portion of the chain corresponds to 2-208 (AASAASSEHF…SRKVITNKLL (207 aa)). A coiled-coil region spans residues 36-98 (AGTEEKKKLV…AKLHREVRST (63 aa)). Arginine 107 carries the omega-N-methylarginine modification. Serine 138 is subject to Phosphoserine. Residues 160 to 201 (GTEIIEELGEQRDQLERTKSRLVNTNENLSKSRKILRSMSRK) adopt a coiled-coil conformation. The chain crosses the membrane as a helical; Anchor for type IV membrane protein span at residues 209-229 (LSVIILLELAILVGLVYYKFF). At 230–232 (RHH) the chain is on the vesicular side.

Belongs to the VTI1 family. In terms of assembly, forms a SNARE complex with STX7, STX8 and VAMP8 which functions in the homotypic fusion of late endosomes. Component of the SNARE complex composed of STX7, STX8, VAMP7 and VIT1B that is required for heterotypic fusion of late endosomes with lysosomes. May interact with STX17. Interacts with CLINT1. In terms of tissue distribution, broadly expressed.

It localises to the early endosome membrane. The protein localises to the late endosome membrane. Its subcellular location is the lysosome membrane. It is found in the cytoplasmic granule. The protein resides in the recycling endosome membrane. Its function is as follows. V-SNARE that mediates vesicle transport pathways through interactions with t-SNAREs on the target membrane. These interactions are proposed to mediate aspects of the specificity of vesicle trafficking and to promote fusion of the lipid bilayers. The chain is Vesicle transport through interaction with t-SNAREs homolog 1B (Vti1b) from Mus musculus (Mouse).